A 37-amino-acid chain; its full sequence is Large ribosomal subunit protein bL36 (37 aa).

The protein belongs to the bacterial ribosomal protein bL36 family.

This is Large ribosomal subunit protein bL36 from Helicobacter pylori (strain HPAG1).